We begin with the raw amino-acid sequence, 323 residues long: NADH-cytochrome b5 reductase 2 (323 aa).

Residues 32–48 form a helical membrane-spanning segment; it reads LAPIYVAVGLTGLGVGL. The FAD-binding FR-type domain maps to 72-177; the sequence is QGWVDLKLAQ…KGPIPKYPWE (106 aa). Residue 180–215 participates in FAD binding; the sequence is KHKHICLIAGGTGITPMYQLARKIFKDPEDQTKVTL.

Belongs to the flavoprotein pyridine nucleotide cytochrome reductase family. FAD serves as cofactor.

The protein resides in the mitochondrion outer membrane. It carries out the reaction 2 Fe(III)-[cytochrome b5] + NADH = 2 Fe(II)-[cytochrome b5] + NAD(+) + H(+). May mediate the reduction of outer membrane cytochrome b5. The polypeptide is NADH-cytochrome b5 reductase 2 (mcr1) (Neosartorya fischeri (strain ATCC 1020 / DSM 3700 / CBS 544.65 / FGSC A1164 / JCM 1740 / NRRL 181 / WB 181) (Aspergillus fischerianus)).